We begin with the raw amino-acid sequence, 493 residues long: UDP-glucose 6-dehydrogenase (493 aa).

Residues 11–16, Asp36, Arg41, and 89–93 contribute to the NAD(+) site; these read GAGYVG and VNTPT. The disordered stretch occupies residues 88-110; the sequence is SVNTPTKTYGMGKGRAADLKYIE. At Lys107 the chain carries N6-acetyllysine. Residues 129-135 are allosteric switch region; that stretch reads KSTVPVR. 130 to 132 contacts NAD(+); it reads STV. Glu161 acts as the Proton donor/acceptor in catalysis. Substrate-binding positions include 161–165, 220–224, Arg260, and 267–273; these read EFLAE, KLAAN, and KASVGFG. An NAD(+)-binding site is contributed by Glu165. Catalysis depends on Lys220, which acts as the Proton donor/acceptor. Cys276 acts as the Nucleophile in catalysis. 276–279 is an NAD(+) binding site; sequence CFQK. Positions 321–325 are important for formation of active hexamer structure; it reads SLFNT. A substrate-binding site is contributed by 338–339; sequence FK. Arg346 contributes to the NAD(+) binding site. Arg442 is a substrate binding site. The disordered stretch occupies residues 466 to 493; that stretch reads VSSKRIPYTPGEIPKFSLQDPPNKKPKV. A Phosphothreonine modification is found at Thr474.

Belongs to the UDP-glucose/GDP-mannose dehydrogenase family. As to quaternary structure, homohexamer.

It catalyses the reaction UDP-alpha-D-glucose + 2 NAD(+) + H2O = UDP-alpha-D-glucuronate + 2 NADH + 3 H(+). Its pathway is nucleotide-sugar biosynthesis; UDP-alpha-D-glucuronate biosynthesis; UDP-alpha-D-glucuronate from UDP-alpha-D-glucose: step 1/1. Its activity is regulated as follows. UDP-alpha-D-xylose (UDX) acts as a feedback inhibitor. It binds at the same site as the substrate, but functions as allosteric inhibitor by triggering a conformation change that disrupts the active hexameric ring structure and gives rise to an inactive, horseshoe-shaped hexamer. In terms of biological role, catalyzes the formation of UDP-alpha-D-glucuronate, a constituent of complex glycosaminoglycans. Required for the biosynthesis of chondroitin sulfate and heparan sulfate. Required for embryonic development via its role in the biosynthesis of glycosaminoglycans. Required for proper brain and neuronal development. The polypeptide is UDP-glucose 6-dehydrogenase (Ugdh) (Mus musculus (Mouse)).